The sequence spans 156 residues: Ribosomal RNA large subunit methyltransferase H (156 aa).

S-adenosyl-L-methionine-binding positions include Leu73, Gly104, and 123 to 128; that span reads LSDLTL.

This sequence belongs to the RNA methyltransferase RlmH family. As to quaternary structure, homodimer.

It is found in the cytoplasm. The catalysed reaction is pseudouridine(1915) in 23S rRNA + S-adenosyl-L-methionine = N(3)-methylpseudouridine(1915) in 23S rRNA + S-adenosyl-L-homocysteine + H(+). Specifically methylates the pseudouridine at position 1915 (m3Psi1915) in 23S rRNA. The chain is Ribosomal RNA large subunit methyltransferase H from Methylibium petroleiphilum (strain ATCC BAA-1232 / LMG 22953 / PM1).